The following is a 598-amino-acid chain: Nuclear receptor subfamily 4 group A member 1 (598 aa).

2 disordered regions span residues 1–43 (MPCI…PEAA) and 128–151 (GSDYYGSPCSAPSPSTPSFQPPQL). The span at 134-145 (SPCSAPSPSTPS) shows a compositional bias: low complexity. The interval 171–466 (RAWTEQLPKA…PAEGKLIFCS (296 aa)) is required for nuclear import. The nuclear receptor DNA-binding region spans 264 to 339 (EGRCAVCGDN…VGMVKEVVRT (76 aa)). 2 consecutive NR C4-type zinc fingers follow at residues 267–287 (CAVCGDNASCQHYGVRTCEGC) and 303–327 (CLANKDCPVDKRRRNRCQFCRFQKC). The interval 268–354 (AVCGDNASCQ…RRGRLPSKPK (87 aa)) is required for binding NBRE-containing DNA. Residues 299–361 (AKYICLANKD…KPKQPPETSP (63 aa)) form a required for the interaction with RXRA region. S341 is subject to Phosphoserine; by PKA. The interval 341–361 (SLKGRRGRLPSKPKQPPETSP) is disordered. S351 bears the Phosphoserine; by PKA, RPS6KA1 and RPS6KA3 mark. The 236-residue stretch at 360-595 (SPAHLLTSLV…PIVDKIFMDT (236 aa)) folds into the NR LBD domain. Residues 521 to 544 (PRRVEELQNRIASCLKEHVSAEAG) form a binds lipopolysaccharide region. The AF-2 stretch occupies residues 584–595 (PPPIVDKIFMDT).

This sequence belongs to the nuclear hormone receptor family. NR4 subfamily. In terms of assembly, binds the NGFI-B response element (NBRE) as a monomer. Binds the Nur response element (NurRE), consisting of two inverse NBRE-related octanucleotide repeats separated by 6 base-pairs, as a dimer. Interacts (via N-terminus) with NLRP3 (via LRR repeat domain); the interaction is direct, requires binding of NR4A1/Nur77 to NBRE-containing dsDNA and lipopolysaccharide, and leads to non-canonical NLRP3 inflammasome activation. Interacts with GADD45GIP1. Interacts with STK11. Interacts with IFI27. Heterodimer (via DNA-binding domain) with RXRA (via C-terminus); DNA-binding of the heterodimer is enhanced by 9-cis retinoic acid. Competes for the RXRA interaction with EP300 and thereby attenuates EP300 mediated acetylation of RXRA. Interacts with NCOA1. Interacts with NCOA2. Interacts with NCOA3. The cofactor is Zn(2+). In terms of processing, phosphorylated at Ser-351 by RPS6KA1 and RPS6KA3 in response to mitogenic or stress stimuli. Acetylated by p300/CBP, acetylation increases stability. Deacetylated by HDAC1.

The protein resides in the nucleus. It localises to the cytoplasm. It is found in the cytosol. The protein localises to the mitochondrion. Functionally, orphan nuclear receptor. Binds the NGFI-B response element (NBRE) 5'-AAAGGTCA-3'. Binds 9-cis-retinoic acid outside of its ligand-binding (NR LBD) domain. Participates in energy homeostasis by sequestrating the kinase STK11 in the nucleus, thereby attenuating cytoplasmic AMPK activation. Regulates the inflammatory response in macrophages by regulating metabolic adaptations during inflammation, including repressing the transcription of genes involved in the citric acid cycle (TCA). Inhibits NF-kappa-B signaling by binding to low-affinity NF-kappa-B binding sites, such as at the IL2 promoter. May act concomitantly with NR4A2 in regulating the expression of delayed-early genes during liver regeneration. Plays a role in the vascular response to injury. In the cytosol, upon its detection of both bacterial lipopolysaccharide (LPS) and NBRE-containing mitochondrial DNA released by GSDMD pores during pyroptosis, it promotes non-canonical NLRP3 inflammasome activation by stimulating association of NLRP3 and NEK7. The protein is Nuclear receptor subfamily 4 group A member 1 (NR4A1) of Bos taurus (Bovine).